A 543-amino-acid chain; its full sequence is Limonene hydroxylase (543 aa).

The 233-residue stretch at 232–464 (VVTYNPSFEK…LRNVIERAFL (233 aa)) folds into the Sigma-54 factor interaction domain. Residues 260 to 267 (GETGSGKE) and 324 to 333 (ADGGTLFLDE) contribute to the ATP site.

The enzyme catalyses (4S)-limonene + reduced [NADPH--hemoprotein reductase] + O2 = (1S,5R)-carveol + oxidized [NADPH--hemoprotein reductase] + H2O + H(+). It carries out the reaction (4S)-limonene + reduced [NADPH--hemoprotein reductase] + O2 = (4S)-perillyl alcohol + oxidized [NADPH--hemoprotein reductase] + H2O + H(+). The catalysed reaction is perillyl alcohol + NAD(+) = perillyl aldehyde + NADH + H(+). It catalyses the reaction (1S,5R)-carveol + NADP(+) = (R)-carvone + NADPH + H(+). Involved in limonene hydroxylation to a mixture of carveol and perillyl alcohol as well as in dehydrogenation of these products to carvone and perillyl aldehyde. Aromatic alcohols containing an isopropyl or isopropenyl group at ring position 4 also served as substrates for the dehydrogenase activity. This Geobacillus stearothermophilus (Bacillus stearothermophilus) protein is Limonene hydroxylase.